The primary structure comprises 344 residues: MAP3K12-binding inhibitory protein 1 (344 aa).

Position 91 is a phosphoserine (Ser-91). Residues Lys-94, Lys-118, Lys-129, Lys-139, Lys-153, and Lys-235 each participate in a glycyl lysine isopeptide (Lys-Gly) (interchain with G-Cter in SUMO2) cross-link. The interaction with MAP3K12 stretch occupies residues 172–344; the sequence is AEINENNVRE…AESMATHHLP (173 aa). The tract at residues 271–285 is leucine-zipper 1; sequence IYQRIKKLEDKILEL. Lys-301 carries the N6-acetyllysine; alternate modification. Residue Lys-301 forms a Glycyl lysine isopeptide (Lys-Gly) (interchain with G-Cter in SUMO2); alternate linkage. Residues Lys-304 and Lys-325 each participate in a glycyl lysine isopeptide (Lys-Gly) (interchain with G-Cter in SUMO2) cross-link. Positions 314–329 are leucine-zipper 2; it reads LAELDEKISALKQALL.

In terms of assembly, component of the ADA2A-containing complex (ATAC), composed of KAT14, KAT2A, TADA2L, TADA3L, ZZ3, MBIP, WDR5, YEATS2, CCDC101 and DR1. In the complex, it probably interacts directly with KAT2A, KAT14 and WDR5. In terms of tissue distribution, ubiquitous. High expression seen in the heart and lung.

Its subcellular location is the nucleus. The protein localises to the cytoplasm. Its function is as follows. Inhibits the MAP3K12 activity to induce the activation of the JNK/SAPK pathway. Component of the ATAC complex, a complex with histone acetyltransferase activity on histones H3 and H4. This Homo sapiens (Human) protein is MAP3K12-binding inhibitory protein 1 (MBIP).